The chain runs to 389 residues: Succinate--CoA ligase [ADP-forming] subunit beta (389 aa).

One can recognise an ATP-grasp domain in the interval Lys-9–Glu-244. ATP contacts are provided by residues Lys-46, Gly-53–Gly-55, Glu-99, Ala-102, and Glu-107. Asn-199 and Asp-213 together coordinate Mg(2+). Residues Asn-264 and Gly-321–Val-323 each bind substrate.

It belongs to the succinate/malate CoA ligase beta subunit family. As to quaternary structure, heterotetramer of two alpha and two beta subunits. The cofactor is Mg(2+).

It carries out the reaction succinate + ATP + CoA = succinyl-CoA + ADP + phosphate. The catalysed reaction is GTP + succinate + CoA = succinyl-CoA + GDP + phosphate. Its pathway is carbohydrate metabolism; tricarboxylic acid cycle; succinate from succinyl-CoA (ligase route): step 1/1. Its function is as follows. Succinyl-CoA synthetase functions in the citric acid cycle (TCA), coupling the hydrolysis of succinyl-CoA to the synthesis of either ATP or GTP and thus represents the only step of substrate-level phosphorylation in the TCA. The beta subunit provides nucleotide specificity of the enzyme and binds the substrate succinate, while the binding sites for coenzyme A and phosphate are found in the alpha subunit. This is Succinate--CoA ligase [ADP-forming] subunit beta from Histophilus somni (strain 2336) (Haemophilus somnus).